The primary structure comprises 75 residues: Sec-independent protein translocase protein TatA (75 aa).

A helical transmembrane segment spans residues 1–21; the sequence is MGSFSIWHWLIVLVIIALVFG. A disordered region spans residues 45 to 75; sequence DASADKPADQVTQQRVSDDTIDVQAKEKSNS.

This sequence belongs to the TatA/E family. As to quaternary structure, the Tat system comprises two distinct complexes: a TatABC complex, containing multiple copies of TatA, TatB and TatC subunits, and a separate TatA complex, containing only TatA subunits. Substrates initially bind to the TatABC complex, which probably triggers association of the separate TatA complex to form the active translocon.

The protein resides in the cell inner membrane. In terms of biological role, part of the twin-arginine translocation (Tat) system that transports large folded proteins containing a characteristic twin-arginine motif in their signal peptide across membranes. TatA could form the protein-conducting channel of the Tat system. This Bordetella bronchiseptica (strain ATCC BAA-588 / NCTC 13252 / RB50) (Alcaligenes bronchisepticus) protein is Sec-independent protein translocase protein TatA.